A 97-amino-acid polypeptide reads, in one-letter code: Osteocalcin (97 aa).

The first 20 residues, 1–20 (MKAAALLLLAALLTFSLCRS), serve as a signal peptide directing secretion. A propeptide spanning residues 21–48 (APDGSDARSAKAFISHRQRAEMVRRQKR) is cleaved from the precursor. Positions 49–95 (HYAQDSGVAGAPPNPLEAQREVCELSPDCDELADQIGFQEAYRRFYG) constitute a Gla domain. Residues Glu-65, Glu-69, Glu-72, and Asp-78 each contribute to the Ca(2+) site. 4-carboxyglutamate is present on residues Glu-65, Glu-69, and Glu-72. Cys-71 and Cys-77 are oxidised to a cystine.

Belongs to the osteocalcin/matrix Gla protein family. Gamma-carboxyglutamate residues are formed by vitamin K dependent carboxylation by GGCX. These residues are essential for the binding of calcium.

It is found in the secreted. Functionally, the carboxylated form is one of the main organic components of the bone matrix, which constitutes 1-2% of the total bone protein. The carboxylated form binds strongly to apatite and calcium. The polypeptide is Osteocalcin (BGLAP) (Gallus gallus (Chicken)).